The primary structure comprises 266 residues: Protein PYRICULARIA ORYZAE RESISTANCE 21 (266 aa).

The HMA domain maps to 1–68; sequence MGILVILVDL…IWCKAGKIIK (68 aa). The a metal cation site is built by C12 and C15. The segment at 129–156 is disordered; the sequence is CEKPKPCEKPPPCKPEEPPKPPPEKPPP. The segment covering 142–156 has biased composition (basic and acidic residues); that stretch reads KPEEPPKPPPEKPPP.

In terms of biological role, involved in defense responses. Contributes to slowing defense responses toward Magnaporthe oryzae. In Oryza sativa subsp. japonica (Rice), this protein is Protein PYRICULARIA ORYZAE RESISTANCE 21.